Consider the following 433-residue polypeptide: Evolutionarily conserved signaling intermediate in Toll pathway, mitochondrial (433 aa).

The transit peptide at 1–48 directs the protein to the mitochondrion; it reads MSWAQAILLARGASRGWGGICSTALTGAPFSQVPPQAPRGLRCSAAAH. Residues 36 to 63 form a disordered region; sequence QAPRGLRCSAAAHNPDSSLVPHPPEPPR. Residue lysine 372 forms a Glycyl lysine isopeptide (Lys-Gly) (interchain with G-Cter in ubiquitin) linkage. Residues 397–433 form a disordered region; that stretch reads SGELLPSSSELEEPPPPPPEGQEEEEDSQQRQQQGQS.

Belongs to the ECSIT family. As to quaternary structure, interacts with MAP3K1, SMAD4 and TRAF6. Interacts with SMAD1 only after BMP4-treatment. Part of the mitochondrial complex I assembly/MCIA complex that comprises at least the core subunits TMEM126B, NDUFAF1, ECSIT and ACAD9 and complement subunits such as COA1 and TMEM186. Interacts with NDUFAF1. Interacts with ACAD9. Interacts with TRIM59. Interacts with TMEM70 and TMEM242. Interacts (when ubiquitinated) with NF-kappa-B subunits RELA and NFKB1. Interacts with RIGI, IFIT1 and MAVS; these interactions promote RLR-mediated type I IFN induction. Interacts with SQSTM1; this interaction inhibits TLR4 signaling via functional regulation of the TRAF6-ECSIT complex. Interacts with cereblon/CRBN; this interaction inhibits the ubiquitination of ECSIT. Ubiquitinated on Lys-372; leading to translocation in the nucleus together with RELA and NFKB1 and expression of NF-kappa-B-dependent genes.

The protein localises to the cytoplasm. It is found in the nucleus. The protein resides in the mitochondrion. In terms of biological role, adapter protein that plays a role in different signaling pathways including TLRs and IL-1 pathways or innate antiviral induction signaling. Plays a role in the activation of NF-kappa-B by forming a signal complex with TRAF6 and TAK1/MAP3K7 to activate TAK1/MAP3K7 leading to activation of IKKs. Once ubiquitinated, interacts with the dissociated RELA and NFKB1 proteins and translocates to the nucleus where it induces NF-kappa-B-dependent gene expression. Plays a role in innate antiviral immune response by bridging the pattern recognition receptors RIGI and MDA5/IFIT1 to the MAVS complex at the mitochondrion. Promotes proteolytic activation of MAP3K1. Involved in the BMP signaling pathway. Required for normal embryonic development. Its function is as follows. As part of the MCIA complex, involved in the assembly of the mitochondrial complex I. The chain is Evolutionarily conserved signaling intermediate in Toll pathway, mitochondrial from Bos taurus (Bovine).